The sequence spans 385 residues: Isocitrate dehydrogenase [NAD] subunit beta, mitochondrial (385 aa).

Residues 1–33 (MAALSRVRWLTRALVAAPNPGAWRSLCTSTVAQ) constitute a mitochondrion transit peptide. Lysine 199 carries the post-translational modification N6-acetyllysine.

Belongs to the isocitrate and isopropylmalate dehydrogenases family. In terms of assembly, heterooligomer of subunits alpha (IDH3A), beta (IDH3B), and gamma (IDH3G) in the apparent ratio of 2:1:1. The heterodimer containing one IDH3A and one IDH3B subunit and the heterodimer containing one IDH3A and one IDH3G subunit assemble into a heterotetramer (which contains two subunits of IDH3A, one of IDH3B and one of IDH3G) and further into the heterooctamer. In terms of tissue distribution, isoform A is predominant in heart muscle; also found in brain, kidney and liver. Isoform B is present in kidney and liver.

The protein localises to the mitochondrion. The heterotetramer and the heterodimer composed of IDH3A and IDH3G subunits can be allosterically activated by citrate (CIT) or/and ADP, and the two activators can act independently or synergistically. The heterodimer composed of IDH3A and IDH3B subunits cannot be allosterically regulated and the allosteric regulation of the heterotetramer is through the IDH3G subunit and not the IDH3B subunit. The IDH3G subunit contains the allosteric site which consists of a CIT-binding site and an ADP-binding site, and the binding of CIT and ADP causes conformational changes at the allosteric site which are transmitted to the active site in the catalytic subunit (IDH3A) through a cascade of conformational changes at the heterodimer interface, leading to stabilization of the isocitrate-binding at the active site and thus activation of the enzyme. ATP can activate the heterotetramer and the heterodimer composed of IDH3A and IDH3G subunits at low concentrations but inhibits their activities at high concentrations, whereas ATP exhibits only inhibitory effect on the heterodimer composed of IDH3A and IDH3B subunits. Its function is as follows. Plays a structural role to facilitate the assembly and ensure the full activity of the enzyme catalyzing the decarboxylation of isocitrate (ICT) into alpha-ketoglutarate. The heterodimer composed of the alpha (IDH3A) and beta (IDH3B) subunits and the heterodimer composed of the alpha (IDH3A) and gamma (IDH3G) subunits, have considerable basal activity but the full activity of the heterotetramer (containing two subunits of IDH3A, one of IDH3B and one of IDH3G) requires the assembly and cooperative function of both heterodimers. This Bos taurus (Bovine) protein is Isocitrate dehydrogenase [NAD] subunit beta, mitochondrial (IDH3B).